A 663-amino-acid polypeptide reads, in one-letter code: Polyunsaturated fatty acid lipoxygenase ALOX15 (663 aa).

One can recognise a PLAT domain in the interval 2–115; the sequence is GVYRVCVSTG…VQSLPVGTGC (114 aa). The region spanning 116–663 is the Lipoxygenase domain; the sequence is TTVGDPQGLF…PSIVENSVAI (548 aa). Fe cation is bound by residues histidine 361, histidine 366, histidine 541, histidine 545, and isoleucine 663.

This sequence belongs to the lipoxygenase family. As to quaternary structure, interacts with PEBP1; in response to IL13/interleukin-13, prevents the interaction of PEBP1 with RAF1 to activate the ERK signaling cascade. Fe cation is required as a cofactor. Detected in reticulocytes (at protein level).

The protein resides in the cytoplasm. The protein localises to the cytosol. It localises to the cell membrane. It is found in the lipid droplet. The catalysed reaction is (5Z,8Z,11Z,14Z)-eicosatetraenoate + O2 = (12S)-hydroperoxy-(5Z,8Z,10E,14Z)-eicosatetraenoate. The enzyme catalyses (5Z,8Z,11Z,14Z)-eicosatetraenoate + O2 = (15S)-hydroperoxy-(5Z,8Z,11Z,13E)-eicosatetraenoate. It carries out the reaction (9Z,12Z)-octadecadienoate + O2 = (13S)-hydroperoxy-(9Z,11E)-octadecadienoate. It catalyses the reaction (5Z,8Z,11Z,14Z)-eicosatetraenoate + 2 O2 = (14R,15S)-dihydroperoxy-(5Z,8Z,10E,12E)-eicosatetraenoate. The catalysed reaction is (5Z,8Z,11Z,14Z)-eicosatetraenoate + 2 O2 = (8S,15S)-dihydroperoxy-(5Z,9E,11Z,13E)-eicosatetraenoate. The enzyme catalyses (14S,15R)-epoxy-(5Z,8Z,11Z)-eicosatrienoate + O2 = (8S)-hydroperoxy-(14S,15R)-epoxy-(5Z,9E,11Z)-eicosatrienoate. It carries out the reaction (14S,15R)-epoxy-(5Z,8Z,11Z)-eicosatrienoate + O2 = (12S)-hydroperoxy-(14S,15R)-epoxy-(5Z,8Z,10E)-eicosatrienoate. It catalyses the reaction (14R,15S)-epoxy-(5Z,8Z,11Z)-eicosatrienoate + O2 = (5S)-hydroperoxy-(14R,15S)-epoxy-(6E,8Z,11Z)-eicosatrienoate. The catalysed reaction is (14R,15S)-epoxy-(5Z,8Z,11Z)-eicosatrienoate + O2 = (12S)-hydroperoxy-(14R,15S)-epoxy-(5Z,8Z,10E)-eicosatrienoate. The enzyme catalyses (15R)-hydroperoxy-(5Z,8Z,11Z,13E)-eicosatetraenoate = 15-oxo-(5Z,8Z,11Z,13E)-eicosatetraenoate + H2O. It carries out the reaction (15S)-hydroperoxy-(5Z,8Z,11Z,13E)-eicosatetraenoate = (14S,15S)-epoxy-(5Z,8Z,10E,12E)-eicosatetraenoate + H2O. It catalyses the reaction (12S)-hydroperoxy-(5Z,8Z,10E,14Z)-eicosatetraenoate = (8S)-hydroxy-(11S,12S)-epoxy-(5Z,9E,14Z)-eicosatrienoate. The catalysed reaction is (4Z,7Z,10Z,13Z,16Z)-docosapentaenoate + O2 = 14-hydroperoxy-(4Z,7Z,10Z,12E,16Z)-docosapentaenoate. The enzyme catalyses (7Z,10Z,13Z,16Z,19Z)-docosapentaenoate + O2 = 14-hydroperoxy-(7Z,10Z,12E,16Z,19Z)-docosapentaenoate. It carries out the reaction (4Z,7Z,10Z,13Z,16Z,19Z)-docosahexaenoate + O2 = (14S)-hydroperoxy-(4Z,7Z,10Z,12E,16Z,19Z)-docosahexaenoate. It catalyses the reaction (4Z,7Z,10Z,13Z,16Z,19Z)-docosahexaenoate + O2 = (17S)-hydroperoxy-(4Z,7Z,10Z,13Z,15E,19Z)-docosahexaenoate. The catalysed reaction is (7S)-hydroperoxy-(4Z,8E,10Z,13Z,16Z,19Z)-docosahexaenoate + O2 = (7S,14S)-dihydroperoxy-(4Z,8E,10Z,12E,16Z,19Z)-docosahexaenoate. The enzyme catalyses (7S)-hydroperoxy-(4Z,8E,10Z,13Z,16Z,19Z)-docosahexaenoate + O2 = (7S,17S)-dihydroperoxy-(4Z,8E,10Z,13Z,15E,19Z)-docosahexaenoate. It carries out the reaction (4Z,7Z,10Z,13Z,16Z,19Z)-docosahexaenoate + O2 = (11S)-hydroperoxy-(4Z,7Z,9E,13Z,16Z,19Z)-docosahexaenoate. It catalyses the reaction N-(5Z,8Z,11Z,14Z)-eicosatetraenoyl-taurine + O2 = N-(15S)-hydroperoxy-(5Z,8Z,11Z,13E)-eicosatetraenoyl-taurine. The catalysed reaction is N-(5Z,8Z,11Z,14Z)-eicosatetraenoyl-gamma-aminobutanoate + O2 = N-(15S)-hydroperoxy-(5Z,8Z,11Z,13E)-eicosatetraenoyl-gamma-aminobutanoate. The enzyme catalyses N-(5Z,8Z,11Z,14Z)-eicosatetraenoyl-glycine + O2 = N-(15S)-hydroperoxy-(5Z,8Z,11Z,13E)-eicosatetraenoyl-glycine. It carries out the reaction N-(5Z,8Z,11Z,14Z)-eicosatetraenoyl-L-alanine + O2 = N-(15S)-hydroperoxy-(5Z,8Z,11Z,13E)-eicosatetraenoyl-alanine. It catalyses the reaction N-(5Z,8Z,11Z,14Z)-eicosatetraenoyl-taurine + O2 = N-(12S)-hydroperoxy-(5Z,8Z,10E,14Z)-eicosatetraenoyl-taurine. The catalysed reaction is N-(5Z,8Z,11Z,14Z)-eicosatetraenoyl-gamma-aminobutanoate + O2 = N-(12S)-hydroperoxy-(5Z,8Z,10E,14Z)-eicosatetraenoyl-gamma-aminobutanoate. The enzyme catalyses N-(5Z,8Z,11Z,14Z)-eicosatetraenoyl-glycine + O2 = N-(12S)-hydroperoxy-(5Z,8Z,10E,14Z)-eicosatetraenoyl-glycine. It carries out the reaction N-(5Z,8Z,11Z,14Z)-eicosatetraenoyl-L-alanine + O2 = N-(12S)-hydroperoxy-(5Z,8Z,10E,14Z)-eicosatetraenoyl-alanine. It participates in lipid metabolism; hydroperoxy eicosatetraenoic acid biosynthesis. Its function is as follows. Non-heme iron-containing dioxygenase that catalyzes the stereo-specific peroxidation of free and esterified polyunsaturated fatty acids generating a spectrum of bioactive lipid mediators. It inserts peroxyl groups at C12 or C15 of arachidonate ((5Z,8Z,11Z,14Z)-eicosatetraenoate) producing both 12-hydroperoxyeicosatetraenoate/12-HPETE and 15-hydroperoxyeicosatetraenoate/15-HPETE. It may then act on 12-HPETE to produce hepoxilins, which may show pro-inflammatory properties. Can also peroxidize linoleate ((9Z,12Z)-octadecadienoate) to 13-hydroperoxyoctadecadienoate. May participate in the sequential oxidations of DHA ((4Z,7Z,10Z,13Z,16Z,19Z)-docosahexaenoate) to generate specialized pro-resolving mediators (SPMs)like resolvin D5 ((7S,17S)-diHPDHA) and (7S,14S)-diHPDHA, that actively down-regulate the immune response and have anti-aggregation properties with platelets. Can convert epoxy fatty acids to hydroperoxy-epoxides derivatives followed by an intramolecular nucleophilic substitution leading to the formation of monocyclic endoperoxides. Plays an important role during the maintenance of self-tolerance by peroxidizing membrane-bound phosphatidylethanolamine which can then signal the sorting process for clearance of apoptotic cells during inflammation and prevent an autoimmune response. In addition to its role in the immune and inflammatory responses, this enzyme may play a role in epithelial wound healing in the cornea through production of lipoxin A4 (LXA(4)) and docosahexaenoic acid-derived neuroprotectin D1 (NPD1; 10R,17S-HDHA), both lipid autacoids exhibit anti-inflammatory and neuroprotective properties. Furthermore, it may regulate actin polymerization which is crucial for several biological processes such as the phagocytosis of apoptotic cells. It is also implicated in the generation of endogenous ligands for peroxisome proliferator activated receptor (PPAR-gamma), hence modulating macrophage development and function. It may also exert a negative effect on skeletal development by regulating bone mass through this pathway. As well as participates in ER stress and downstream inflammation in adipocytes, pancreatic islets, and liver. Finally, it is also involved in the cellular response to IL13/interleukin-13. This Oryctolagus cuniculus (Rabbit) protein is Polyunsaturated fatty acid lipoxygenase ALOX15.